Consider the following 556-residue polypeptide: Arginine--tRNA ligase (556 aa).

Positions 132–142 match the 'HIGH' region motif; sequence ANPTGDLHLGH.

This sequence belongs to the class-I aminoacyl-tRNA synthetase family. In terms of assembly, monomer.

It is found in the cytoplasm. It catalyses the reaction tRNA(Arg) + L-arginine + ATP = L-arginyl-tRNA(Arg) + AMP + diphosphate. The chain is Arginine--tRNA ligase (argS) from Bacillus subtilis (strain 168).